Reading from the N-terminus, the 207-residue chain is Fibroblast growth factor 18 (207 aa).

An N-terminal signal peptide occupies residues 1 to 27 (MYSAPSACTCLCLHFLLLCFQVQVLAA). N-linked (GlcNAc...) asparagine glycosylation occurs at Asn-39. An intrachain disulfide couples Cys-109 to Cys-127. N-linked (GlcNAc...) asparagine glycosylation occurs at Asn-137.

The protein belongs to the heparin-binding growth factors family. As to quaternary structure, interacts with FGFR3 and FGFR4.

It localises to the secreted. Plays an important role in the regulation of cell proliferation, cell differentiation and cell migration. Required for normal ossification and bone development. Stimulates hepatic and intestinal proliferation. In Mus musculus (Mouse), this protein is Fibroblast growth factor 18 (Fgf18).